Here is a 264-residue protein sequence, read N- to C-terminus: Thymidylate synthase (264 aa).

DUMP is bound at residue Arg-21. His-51 contributes to the (6R)-5,10-methylene-5,6,7,8-tetrahydrofolate binding site. 126 to 127 (RR) serves as a coordination point for dUMP. Cys-146 (nucleophile) is an active-site residue. Residues 166 to 169 (RSCD), Asn-177, and 207 to 209 (HLY) each bind dUMP. Asp-169 contacts (6R)-5,10-methylene-5,6,7,8-tetrahydrofolate. Ala-263 provides a ligand contact to (6R)-5,10-methylene-5,6,7,8-tetrahydrofolate.

The protein belongs to the thymidylate synthase family. Bacterial-type ThyA subfamily. As to quaternary structure, homodimer.

Its subcellular location is the cytoplasm. It catalyses the reaction dUMP + (6R)-5,10-methylene-5,6,7,8-tetrahydrofolate = 7,8-dihydrofolate + dTMP. The protein operates within pyrimidine metabolism; dTTP biosynthesis. Catalyzes the reductive methylation of 2'-deoxyuridine-5'-monophosphate (dUMP) to 2'-deoxythymidine-5'-monophosphate (dTMP) while utilizing 5,10-methylenetetrahydrofolate (mTHF) as the methyl donor and reductant in the reaction, yielding dihydrofolate (DHF) as a by-product. This enzymatic reaction provides an intracellular de novo source of dTMP, an essential precursor for DNA biosynthesis. The protein is Thymidylate synthase of Serratia proteamaculans (strain 568).